Consider the following 240-residue polypeptide: Regulatory protein HlyX (240 aa).

The segment at 15 to 28 (CTIHCQNCSISQLC) is essential for the oxygen-regulated activity. Residues 163–236 (MSAEEKLAAF…GKYITINRMD (74 aa)) form the HTH crp-type domain. Residues 196–215 (RGDIGNYLGLTIETISRLLG) constitute a DNA-binding region (H-T-H motif).

Its subcellular location is the cytoplasm. Functionally, confers a hemolytic phenotype on E.coli. May regulate, rather than mediate, hemolytic activity. This is Regulatory protein HlyX (hlyX) from Actinobacillus pleuropneumoniae (Haemophilus pleuropneumoniae).